The primary structure comprises 471 residues: ATP synthase subunit beta (471 aa).

157–164 (GGAGVGKT) serves as a coordination point for ATP.

Belongs to the ATPase alpha/beta chains family. As to quaternary structure, F-type ATPases have 2 components, CF(1) - the catalytic core - and CF(0) - the membrane proton channel. CF(1) has five subunits: alpha(3), beta(3), gamma(1), delta(1), epsilon(1). CF(0) has three main subunits: a(1), b(2) and c(9-12). The alpha and beta chains form an alternating ring which encloses part of the gamma chain. CF(1) is attached to CF(0) by a central stalk formed by the gamma and epsilon chains, while a peripheral stalk is formed by the delta and b chains.

It is found in the cell inner membrane. It catalyses the reaction ATP + H2O + 4 H(+)(in) = ADP + phosphate + 5 H(+)(out). Its function is as follows. Produces ATP from ADP in the presence of a proton gradient across the membrane. The catalytic sites are hosted primarily by the beta subunits. This is ATP synthase subunit beta from Trichlorobacter lovleyi (strain ATCC BAA-1151 / DSM 17278 / SZ) (Geobacter lovleyi).